The primary structure comprises 357 residues: Protein phosphatase 1 regulatory subunit 42 (357 aa).

LRR repeat units lie at residues 29 to 50 (KITH…SLCK), 51 to 72 (NLSV…NYAT), 73 to 94 (NLTH…RSLK), 95 to 116 (KLEK…EGLG), 117 to 138 (ELRE…LFDP), 147 to 168 (SLSI…EILE), and 169 to 190 (NLNQ…EFLL). An LRRCT domain is found at 204–242 (NPVCLKPKYRDRLILVSKSLEFLDGKEIKNIERQFLMNW).

In terms of assembly, interacts with PPP1CC isoform gamma-2; the interaction is direct. Interacts with actin, dynein, KIF5B, KIFC1 and tubulin. Associates with microtubules. In terms of processing, phosphorylated; in the testis.

The protein localises to the cytoplasm. It is found in the cytoskeleton. Its subcellular location is the microtubule organizing center. The protein resides in the centrosome. Its function is as follows. Regulates phosphatase activity of protein phosphatase 1 (PP1) complexes in the testis. The chain is Protein phosphatase 1 regulatory subunit 42 (PPP1R42) from Macaca fascicularis (Crab-eating macaque).